The sequence spans 397 residues: Bifunctional enzyme IspD/IspF (397 aa).

A 2-C-methyl-D-erythritol 4-phosphate cytidylyltransferase region spans residues methionine 1 to arginine 233. The tract at residues arginine 233–lysine 397 is 2-C-methyl-D-erythritol 2,4-cyclodiphosphate synthase. Positions 239 and 241 each coordinate a divalent metal cation. Residues aspartate 239–histidine 241 and histidine 270–serine 271 contribute to the 4-CDP-2-C-methyl-D-erythritol 2-phosphate site. Histidine 278 lines the a divalent metal cation pocket. 4-CDP-2-C-methyl-D-erythritol 2-phosphate contacts are provided by residues aspartate 292–glycine 294, threonine 368–glutamate 371, tyrosine 375, and arginine 378.

This sequence in the N-terminal section; belongs to the IspD/TarI cytidylyltransferase family. IspD subfamily. In the C-terminal section; belongs to the IspF family. A divalent metal cation serves as cofactor.

The catalysed reaction is 2-C-methyl-D-erythritol 4-phosphate + CTP + H(+) = 4-CDP-2-C-methyl-D-erythritol + diphosphate. It carries out the reaction 4-CDP-2-C-methyl-D-erythritol 2-phosphate = 2-C-methyl-D-erythritol 2,4-cyclic diphosphate + CMP. It functions in the pathway isoprenoid biosynthesis; isopentenyl diphosphate biosynthesis via DXP pathway; isopentenyl diphosphate from 1-deoxy-D-xylulose 5-phosphate: step 2/6. The protein operates within isoprenoid biosynthesis; isopentenyl diphosphate biosynthesis via DXP pathway; isopentenyl diphosphate from 1-deoxy-D-xylulose 5-phosphate: step 4/6. In terms of biological role, bifunctional enzyme that catalyzes the formation of 4-diphosphocytidyl-2-C-methyl-D-erythritol from CTP and 2-C-methyl-D-erythritol 4-phosphate (MEP) (IspD), and catalyzes the conversion of 4-diphosphocytidyl-2-C-methyl-D-erythritol 2-phosphate (CDP-ME2P) to 2-C-methyl-D-erythritol 2,4-cyclodiphosphate (ME-CPP) with a corresponding release of cytidine 5-monophosphate (CMP) (IspF). This Wolbachia pipientis wMel protein is Bifunctional enzyme IspD/IspF.